The primary structure comprises 267 residues: Interleukin-1 beta (267 aa).

A propeptide spanning residues 1–115 (MAPVPELTSE…DTWDDGFVCD (115 aa)) is cleaved from the precursor.

Belongs to the IL-1 family. As to quaternary structure, monomer. In its precursor form, weakly interacts with full-length MEFV; the mature cytokine does not interact at all. Interacts with integrins ITGAV:ITGBV and ITGA5:ITGB1; integrin-binding is required for IL1B signaling. Interacts with cargo receptor TMED10; the interaction is direct and is required for the secretion of IL1B mature form. Interacts with HSP90AB1; the interaction facilitates cargo translocation into the ERGIC. Interacts with HSP90B1; the interaction facilitates cargo translocation into the ERGIC.

The protein localises to the cytoplasm. It is found in the cytosol. The protein resides in the secreted. It localises to the lysosome. Its subcellular location is the extracellular exosome. Potent pro-inflammatory cytokine. Initially discovered as the major endogenous pyrogen, induces prostaglandin synthesis, neutrophil influx and activation, T-cell activation and cytokine production, B-cell activation and antibody production, and fibroblast proliferation and collagen production. Promotes Th17 differentiation of T-cells. Synergizes with IL12/interleukin-12 to induce IFNG synthesis from T-helper 1 (Th1) cells. Plays a role in angiogenesis by inducing VEGF production synergistically with TNF and IL6. Involved in transduction of inflammation downstream of pyroptosis: its mature form is specifically released in the extracellular milieu by passing through the gasdermin-D (GSDMD) pore. The sequence is that of Interleukin-1 beta (IL1B) from Felis catus (Cat).